The following is a 342-amino-acid chain: tRNA N6-adenosine threonylcarbamoyltransferase (342 aa).

Residues His111 and His115 each contribute to the Fe cation site. Substrate contacts are provided by residues 134–138 (LVSGG), Asp167, Gly180, and Asn277. Asp305 lines the Fe cation pocket.

It belongs to the KAE1 / TsaD family. The cofactor is Fe(2+).

It localises to the cytoplasm. It catalyses the reaction L-threonylcarbamoyladenylate + adenosine(37) in tRNA = N(6)-L-threonylcarbamoyladenosine(37) in tRNA + AMP + H(+). Functionally, required for the formation of a threonylcarbamoyl group on adenosine at position 37 (t(6)A37) in tRNAs that read codons beginning with adenine. Is involved in the transfer of the threonylcarbamoyl moiety of threonylcarbamoyl-AMP (TC-AMP) to the N6 group of A37, together with TsaE and TsaB. TsaD likely plays a direct catalytic role in this reaction. This chain is tRNA N6-adenosine threonylcarbamoyltransferase, found in Haemophilus influenzae (strain ATCC 51907 / DSM 11121 / KW20 / Rd).